We begin with the raw amino-acid sequence, 491 residues long: Cytochrome P450 2B9 (491 aa).

Ser128 carries the post-translational modification Phosphoserine; by PKA. Heme is bound at residue Cys436.

Belongs to the cytochrome P450 family. The cofactor is heme.

Its subcellular location is the endoplasmic reticulum membrane. The protein localises to the microsome membrane. The catalysed reaction is an organic molecule + reduced [NADPH--hemoprotein reductase] + O2 = an alcohol + oxidized [NADPH--hemoprotein reductase] + H2O + H(+). Functionally, cytochromes P450 are a group of heme-thiolate monooxygenases. In liver microsomes, this enzyme is involved in an NADPH-dependent electron transport pathway. It oxidizes a variety of structurally unrelated compounds, including steroids, fatty acids, and xenobiotics. This chain is Cytochrome P450 2B9 (Cyp2b9), found in Mus musculus (Mouse).